The following is an 82-amino-acid chain: UPF0213 protein SH2523 (82 aa).

The GIY-YIG domain maps to 2–77 (AKHYVYIVKC…KTFSRQQKLK (76 aa)).

Belongs to the UPF0213 family.

This chain is UPF0213 protein SH2523, found in Staphylococcus haemolyticus (strain JCSC1435).